Reading from the N-terminus, the 445-residue chain is Glutamate-1-semialdehyde 2,1-aminomutase (445 aa).

Residue Lys264 is modified to N6-(pyridoxal phosphate)lysine.

It belongs to the class-III pyridoxal-phosphate-dependent aminotransferase family. HemL subfamily. Requires pyridoxal 5'-phosphate as cofactor.

Its subcellular location is the cytoplasm. It catalyses the reaction (S)-4-amino-5-oxopentanoate = 5-aminolevulinate. The protein operates within porphyrin-containing compound metabolism; protoporphyrin-IX biosynthesis; 5-aminolevulinate from L-glutamyl-tRNA(Glu): step 2/2. In Halobacterium salinarum (strain ATCC 29341 / DSM 671 / R1), this protein is Glutamate-1-semialdehyde 2,1-aminomutase.